A 287-amino-acid polypeptide reads, in one-letter code: Probable endonuclease 4 (287 aa).

Zn(2+) contacts are provided by histidine 69, histidine 109, glutamate 144, aspartate 178, histidine 181, histidine 215, aspartate 228, histidine 230, and glutamate 260.

The protein belongs to the AP endonuclease 2 family. Zn(2+) is required as a cofactor.

It catalyses the reaction Endonucleolytic cleavage to 5'-phosphooligonucleotide end-products.. In terms of biological role, endonuclease IV plays a role in DNA repair. It cleaves phosphodiester bonds at apurinic or apyrimidinic (AP) sites, generating a 3'-hydroxyl group and a 5'-terminal sugar phosphate. The protein is Probable endonuclease 4 of Thermotoga neapolitana (strain ATCC 49049 / DSM 4359 / NBRC 107923 / NS-E).